Consider the following 125-residue polypeptide: uncharacterized protein (125 aa).

It belongs to the HesB/IscA family.

This is an uncharacterized protein from Azospirillum brasilense.